The chain runs to 303 residues: N-acetyl-D-glucosamine kinase (303 aa).

ATP contacts are provided by residues 4-11 and 133-140; these read GFDIGGTK and GVGGGLIF. The Zn(2+) site is built by His-157, Cys-177, Cys-179, and Cys-184.

It belongs to the ROK (NagC/XylR) family. NagK subfamily.

The enzyme catalyses N-acetyl-D-glucosamine + ATP = N-acetyl-D-glucosamine 6-phosphate + ADP + H(+). The protein operates within cell wall biogenesis; peptidoglycan recycling. Functionally, catalyzes the phosphorylation of N-acetyl-D-glucosamine (GlcNAc) derived from cell-wall degradation, yielding GlcNAc-6-P. In Escherichia coli (strain K12 / DH10B), this protein is N-acetyl-D-glucosamine kinase.